The sequence spans 252 residues: Hydroxyacylglutathione hydrolase (252 aa).

H54, H56, D58, H59, H111, D128, and H166 together coordinate Zn(2+).

Belongs to the metallo-beta-lactamase superfamily. Glyoxalase II family. In terms of assembly, monomer. Zn(2+) serves as cofactor.

The enzyme catalyses an S-(2-hydroxyacyl)glutathione + H2O = a 2-hydroxy carboxylate + glutathione + H(+). The protein operates within secondary metabolite metabolism; methylglyoxal degradation; (R)-lactate from methylglyoxal: step 2/2. Thiolesterase that catalyzes the hydrolysis of S-D-lactoyl-glutathione to form glutathione and D-lactic acid. The protein is Hydroxyacylglutathione hydrolase of Vibrio vulnificus (strain CMCP6).